The chain runs to 261 residues: ATP synthase subunit a (261 aa).

8 helical membrane-spanning segments follow: residues 30–50, 63–83, 96–116, 125–145, 151–171, 187–207, 214–234, and 235–255; these read VLFTNSALWMVVAAITLGLFM, WQVAVEGFTGFISSMMMANIG, LFMFILFCNLLGMLPLGVLGL, IAITGVLALISFAIVLVVGFW, FFSLFVPHGTPLPMIPIIAPI, LFVAMTAGHVLLKVLSGFVIN, LWLGSIVSVLSFTLMIGISAL, and ELLVAGIQAYVFALLTSLYIN.

It belongs to the ATPase A chain family. F-type ATPases have 2 components, CF(1) - the catalytic core - and CF(0) - the membrane proton channel. CF(1) has five subunits: alpha(3), beta(3), gamma(1), delta(1), epsilon(1). CF(0) has three main subunits: a(1), b(2) and c(9-12). The alpha and beta chains form an alternating ring which encloses part of the gamma chain. CF(1) is attached to CF(0) by a central stalk formed by the gamma and epsilon chains, while a peripheral stalk is formed by the delta and b chains.

Its subcellular location is the cell inner membrane. In terms of biological role, key component of the proton channel; it plays a direct role in the translocation of protons across the membrane. This is ATP synthase subunit a from Sphingopyxis alaskensis (strain DSM 13593 / LMG 18877 / RB2256) (Sphingomonas alaskensis).